Consider the following 158-residue polypeptide: Cyclic pyranopterin monophosphate synthase (158 aa).

Substrate contacts are provided by residues 76–78 and 114–115; these read LCH and ME. Residue D129 is part of the active site.

It belongs to the MoaC family. Homohexamer; trimer of dimers.

It catalyses the reaction (8S)-3',8-cyclo-7,8-dihydroguanosine 5'-triphosphate = cyclic pyranopterin phosphate + diphosphate. It functions in the pathway cofactor biosynthesis; molybdopterin biosynthesis. Functionally, catalyzes the conversion of (8S)-3',8-cyclo-7,8-dihydroguanosine 5'-triphosphate to cyclic pyranopterin monophosphate (cPMP). The chain is Cyclic pyranopterin monophosphate synthase from Shewanella frigidimarina (strain NCIMB 400).